Reading from the N-terminus, the 92-residue chain is Small ribosomal subunit protein uS19 (92 aa).

The protein belongs to the universal ribosomal protein uS19 family.

Functionally, protein S19 forms a complex with S13 that binds strongly to the 16S ribosomal RNA. The chain is Small ribosomal subunit protein uS19 from Leuconostoc mesenteroides subsp. mesenteroides (strain ATCC 8293 / DSM 20343 / BCRC 11652 / CCM 1803 / JCM 6124 / NCDO 523 / NBRC 100496 / NCIMB 8023 / NCTC 12954 / NRRL B-1118 / 37Y).